We begin with the raw amino-acid sequence, 210 residues long: Na(+)-translocating NADH-quinone reductase subunit D (210 aa).

6 consecutive transmembrane segments (helical) span residues 9-29 (SVLIGPIVSNNPIALQILGVC), 42-62 (LVMTIALTAVCALSNLFISLI), 72-92 (IIVQMTIIASLVIVVDQVLQA), 103-123 (VFVGLIITNCIVMGRAEAFAM), 131-151 (FMDGLGNGLGYGAILLSVGFV), and 178-198 (NGLLLLPPSAFFLIGALIWII).

This sequence belongs to the NqrDE/RnfAE family. Composed of six subunits; NqrA, NqrB, NqrC, NqrD, NqrE and NqrF.

The protein localises to the cell inner membrane. The enzyme catalyses a ubiquinone + n Na(+)(in) + NADH + H(+) = a ubiquinol + n Na(+)(out) + NAD(+). Functionally, NQR complex catalyzes the reduction of ubiquinone-1 to ubiquinol by two successive reactions, coupled with the transport of Na(+) ions from the cytoplasm to the periplasm. NqrA to NqrE are probably involved in the second step, the conversion of ubisemiquinone to ubiquinol. This is Na(+)-translocating NADH-quinone reductase subunit D from Shewanella piezotolerans (strain WP3 / JCM 13877).